The chain runs to 124 residues: Small ribosomal subunit protein uS11 (124 aa).

The protein belongs to the universal ribosomal protein uS11 family. Part of the 30S ribosomal subunit. Interacts with proteins S7 and S18. Binds to IF-3.

Located on the platform of the 30S subunit, it bridges several disparate RNA helices of the 16S rRNA. Forms part of the Shine-Dalgarno cleft in the 70S ribosome. This Anaplasma marginale (strain St. Maries) protein is Small ribosomal subunit protein uS11.